The following is a 978-amino-acid chain: Chitin synthase 3 (978 aa).

The segment covering 1 to 13 has biased composition (low complexity); that stretch reads MGFNPQGQGNGPN. Disordered stretches follow at residues 1–95 and 108–127; these read MGFN…FDGH and GHYPADQHGRMPGSPGYEYP. Residue Asn72 is glycosylated (N-linked (GlcNAc...) asparagine). N-linked (GlcNAc...) asparagine glycosylation is present at Asn604. 7 consecutive transmembrane segments (helical) span residues 641–661, 686–706, 719–739, 775–795, 803–823, 908–928, and 946–966; these read LVNVLFSWFSLAAFYLTTTII, IVNVLIKYIYIAFLVLQFVLA, VLSFMVFGLIQLYLLVLTGYL, LIIIALFTIYGLNYIASFLYL, SFPQYLVLMSTYINILMVYAF, VILWLLCNIVLIVVVTTDDFI, and VLLYSTAVLSIVRFFGFLWFI.

This sequence belongs to the chitin synthase family. Class III subfamily.

It localises to the cell membrane. It carries out the reaction [(1-&gt;4)-N-acetyl-beta-D-glucosaminyl](n) + UDP-N-acetyl-alpha-D-glucosamine = [(1-&gt;4)-N-acetyl-beta-D-glucosaminyl](n+1) + UDP + H(+). Its function is as follows. Polymerizes chitin, a structural polymer of the cell wall and septum, by transferring the sugar moiety of UDP-GlcNAc to the non-reducing end of the growing chitin polymer. Is essential for viability. The protein is Chitin synthase 3 of Fusarium oxysporum f. sp. lycopersici (strain 4287 / CBS 123668 / FGSC 9935 / NRRL 34936) (Fusarium vascular wilt of tomato).